The primary structure comprises 242 residues: Biosynthetic peptidoglycan transglycosylase (242 aa).

Residues 19–39 form a helical membrane-spanning segment; sequence LMVVLAVFWAGGIALFSVAPV.

It belongs to the glycosyltransferase 51 family.

Its subcellular location is the cell inner membrane. The enzyme catalyses [GlcNAc-(1-&gt;4)-Mur2Ac(oyl-L-Ala-gamma-D-Glu-L-Lys-D-Ala-D-Ala)](n)-di-trans,octa-cis-undecaprenyl diphosphate + beta-D-GlcNAc-(1-&gt;4)-Mur2Ac(oyl-L-Ala-gamma-D-Glu-L-Lys-D-Ala-D-Ala)-di-trans,octa-cis-undecaprenyl diphosphate = [GlcNAc-(1-&gt;4)-Mur2Ac(oyl-L-Ala-gamma-D-Glu-L-Lys-D-Ala-D-Ala)](n+1)-di-trans,octa-cis-undecaprenyl diphosphate + di-trans,octa-cis-undecaprenyl diphosphate + H(+). It participates in cell wall biogenesis; peptidoglycan biosynthesis. Peptidoglycan polymerase that catalyzes glycan chain elongation from lipid-linked precursors. The protein is Biosynthetic peptidoglycan transglycosylase of Shigella boydii serotype 4 (strain Sb227).